The following is a 504-amino-acid chain: Paired zinc finger protein 1 (504 aa).

C2H2-type zinc fingers lie at residues 12 to 35 and 39 to 62; these read LLCG…RQRH and HMCL…KNKH. The segment at 68–91 adopts a C2H2-type 3; degenerate zinc-finger fold; the sequence is FICVCCNWSFGTEIYLKCHEECMK. Disordered stretches follow at residues 115 to 136 and 154 to 173; these read ALNT…SPVP and IESA…LVSG. Polar residues predominate over residues 159–172; it reads RSSASTSTPRTLVS. C2H2-type zinc fingers lie at residues 179–202 and 206–229; these read IPCG…RRFH and HTCL…KSQH. The C2H2-type 6; degenerate zinc-finger motif lies at 235 to 258; it reads YNCLCCNWTFLNQVHLISHKTCLK. The segment at 309–332 adopts a C2H2-type 7 zinc-finger fold; sequence LSCKSCGKFFYSERSLSKHHRQIH. The segment at 365–389 adopts a C2H2-type 8; degenerate zinc-finger fold; the sequence is FNCRCCNWSFATRRCLMSHVECLKK.

Expressed in proximal gonad.

Possible transcriptional regulator. Involved in promoting segregation of chromosomes during meiosis, perhaps acting downstream of the let-60 RAS / mpk-1 MAPK signaling pathway. The polypeptide is Paired zinc finger protein 1 (Caenorhabditis elegans).